The chain runs to 379 residues: Homoserine O-succinyltransferase (379 aa).

The region spanning Asn51 to Leu360 is the AB hydrolase-1 domain. The active-site Nucleophile is the Ser157. Arg227 contacts substrate. Catalysis depends on residues Asp323 and His356. Asp357 is a binding site for substrate.

The protein belongs to the AB hydrolase superfamily. MetX family. As to quaternary structure, homodimer.

It is found in the cytoplasm. It carries out the reaction L-homoserine + succinyl-CoA = O-succinyl-L-homoserine + CoA. The protein operates within amino-acid biosynthesis; L-methionine biosynthesis via de novo pathway; O-succinyl-L-homoserine from L-homoserine: step 1/1. Its function is as follows. Transfers a succinyl group from succinyl-CoA to L-homoserine, forming succinyl-L-homoserine. The chain is Homoserine O-succinyltransferase from Pseudomonas putida (strain GB-1).